The following is a 430-amino-acid chain: Trigger factor (430 aa).

One can recognise a PPIase FKBP-type domain in the interval 163-248 (GNIAIIDFKG…IKDIKVKELP (86 aa)).

This sequence belongs to the FKBP-type PPIase family. Tig subfamily.

The protein localises to the cytoplasm. It catalyses the reaction [protein]-peptidylproline (omega=180) = [protein]-peptidylproline (omega=0). In terms of biological role, involved in protein export. Acts as a chaperone by maintaining the newly synthesized protein in an open conformation. Functions as a peptidyl-prolyl cis-trans isomerase. This is Trigger factor from Clostridium botulinum (strain Okra / Type B1).